The sequence spans 160 residues: Single-stranded DNA-binding protein 3 (160 aa).

Residues 2-104 (MNRVVLVGRL…IVAESVQFLE (103 aa)) form the SSB domain. Polar residues predominate over residues 106 to 133 (KQNGAGGSTSNNNQSETNYSNDNKTSSY). The segment at 106 to 160 (KQNGAGGSTSNNNQSETNYSNDNKTSSYRADRSQNGDSFANEGAPVDINPDDLPF) is disordered.

As to quaternary structure, homotetramer.

The polypeptide is Single-stranded DNA-binding protein 3 (ssb3) (Listeria innocua serovar 6a (strain ATCC BAA-680 / CLIP 11262)).